A 197-amino-acid polypeptide reads, in one-letter code: Probable UbiX-like flavin prenyltransferase (197 aa).

Residues 9-11 (GAT), S36, 87-90 (SMKT), and R122 contribute to the FMN site.

This sequence belongs to the UbiX/PAD1 family. YclB subfamily. In terms of assembly, homododecamer.

It catalyses the reaction dimethylallyl phosphate + FMNH2 = prenylated FMNH2 + phosphate. Its function is as follows. Flavin prenyltransferase that catalyzes the synthesis of the prenylated FMN cofactor (prenyl-FMN) for phenolic acid decarboxylase C. Involved in the decarboxylation and detoxification of phenolic derivatives under both aerobic and anaerobic conditions. This Escherichia coli O111:H- protein is Probable UbiX-like flavin prenyltransferase (ecdB).